Reading from the N-terminus, the 503-residue chain is MDFSIKGCDWSKGTANGFLTGKSDCIVLGVFEAQTLSGAALDIDEATKGLVSRVIKAGDIDGKLGKTLFLHEVSGIGASRVLLVGLGRQDAFSQKAYGDAAKAAWRALLGTKVVQVTFTLAQLPVPERASDWGVRAAILALRNETYKFTQMKSKPDAGAPALKRVVFSVDPADDKAAKVAAKQAVALANGMDLTRDLGNLPGNVCTPTYLANTAKKIAKDWGLKVDVLGLKQIQALKMGSFLSVAKGSVEPPQFIVLQYRGAAAKAAPVVLVGKGITFDSGGISLKPGEGMDEMKYDMCGAGSVLGTMRAVAEMGLKVNVVAIVPTCENMPAGNANKPGDIVTSMKGLTIEVLNTDAEGRLILCDALTYAERFKPAAVIDVATLTGACIIALGHHNTGLFSKDDALAGELLDASREAGDPAWRLPLDDEYQDQLKSNFADLANIGGRPAGSVTAACFLSRFAENYPWAHLDIAGTAWKSGAAKGATGRPVPLLAQFLIDRAGA.

Mn(2+)-binding residues include lysine 274 and aspartate 279. Residue lysine 286 is part of the active site. Positions 297, 356, and 358 each coordinate Mn(2+). The active site involves arginine 360.

This sequence belongs to the peptidase M17 family. Mn(2+) is required as a cofactor.

The protein localises to the cytoplasm. It carries out the reaction Release of an N-terminal amino acid, Xaa-|-Yaa-, in which Xaa is preferably Leu, but may be other amino acids including Pro although not Arg or Lys, and Yaa may be Pro. Amino acid amides and methyl esters are also readily hydrolyzed, but rates on arylamides are exceedingly low.. It catalyses the reaction Release of an N-terminal amino acid, preferentially leucine, but not glutamic or aspartic acids.. Functionally, presumably involved in the processing and regular turnover of intracellular proteins. Catalyzes the removal of unsubstituted N-terminal amino acids from various peptides. In Burkholderia pseudomallei (strain 1106a), this protein is Probable cytosol aminopeptidase.